Here is a 544-residue protein sequence, read N- to C-terminus: GDP-mannose 4,6-dehydratase sdnI (544 aa).

Residues 16–21, Arg-41, 64–65, and 86–90 contribute to the NADP(+) site; these read GITGQD, DM, and LAAQS. Ser-90 is a binding site for substrate. Active-site nucleophile residues include Glu-135 and Tyr-157. Position 157 (Tyr-157) interacts with substrate. Residue Lys-161 participates in NADP(+) binding. Position 186 (Asn-186) interacts with substrate. Positions 187 and 192 each coordinate NADP(+). Residues 192 to 200, Gly-219, Arg-225, and 303 to 306 contribute to the substrate site; these read RGTTFVTRK and RPVE. The disordered stretch occupies residues 366-406; sequence GETTSAVNSSPSSTAGDTYKASDGWSTSGAEGSEQTECSSV. Composition is skewed to polar residues over residues 368 to 381 and 389 to 404; these read TTSAVNSSPSSTAG and GWSTSGAEGSEQTECS.

Belongs to the NAD(P)-dependent epimerase/dehydratase family. GDP-mannose 4,6-dehydratase subfamily. NADP(+) serves as cofactor.

It carries out the reaction GDP-alpha-D-mannose = GDP-4-dehydro-alpha-D-rhamnose + H2O. It functions in the pathway antibiotic biosynthesis. GDP-mannose 4,6-dehydratase; part of the gene cluster that mediates the biosynthesis of sordarin and hypoxysordarin, glycoside antibiotics with a unique tetracyclic diterpene aglycone structure. First, the geranylgeranyl diphosphate synthase sdnC constructs GGDP from farnesyl diphosphate and isopentenyl diphosphate. The diterpene cyclase sdnA then catalyzes the cyclization of GGDP to afford cycloaraneosene. Cycloaraneosene is then hydroxylated four times by the putative cytochrome P450 monooxygenases sdnB, sdnE, sdnF and sdnH to give a hydroxylated cycloaraneosene derivative such as cycloaraneosene-8,9,13,19-tetraol. Although the order of the hydroxylations is unclear, at least C8, C9 and C13 of the cycloaraneosene skeleton are hydroxylated before the sordaricin formation. Dehydration of the 13-hydroxy group of the hydroxylated cycloaraneosene derivative might be catalyzed by an unassigned hypothetical protein such as sdnG and sdnP to construct the cyclopentadiene moiety. The FAD-dependent oxidoreductase sdnN is proposed to catalyze the oxidation at C9 of the hydroxylated cycloaraneosene derivative and also catalyze the Baeyer-Villiger oxidation to give the lactone intermediate. The presumed lactone intermediate would be hydrolyzed to give an acrolein moiety and a carboxylate moiety. Then, [4+2]cycloaddition would occur between the acrolein moiety and the cyclopentadiene moiety to give sordaricin. SdnN might also be involved in the [4+2]cycloaddition after the hypothesized oxidation to accommodate the oxidized product and prompt the [4+2]cycloaddition. GDP-6-deoxy-D-altrose may be biosynthesized from GDP-D-mannose by the putative GDP-mannose-4,6-dehydratase sdnI and the short-chain dehydrogenase sdnK. The glycosyltransferase sdnJ catalyzes the attachment of 6-deoxy-D-altrose onto the 19-hydroxy group of sordaricin to give 4'-O-demethylsordarin. The methyltransferase sdnD would complete the biosynthesis of sordarin. Sordarin can be further modified into hypoxysordarin. The unique acyl chain at the 3'-hydroxy group of hypoxysordarin would be constructed by an iterative type I PKS sdnO and the trans-acting polyketide methyltransferase sdnL. SdnL would be responsible for the introduction of an alpha-methyl group of the polyketide chain. Alternatively, the beta-lactamase-like protein sdnR might be responsible for the cleavage and transfer of the polyketide chain from the PKS sdnO to sordarin. Two putative cytochrome P450 monooxygenases, sdnQ and sdnT, might catalyze the epoxidations of the polyketide chain to complete the biosynthesis of hypoxysordarin. Transcriptional regulators sdnM and sdnS are presumably encoded for the transcriptional regulation of the expression of the sdn gene cluster. This is GDP-mannose 4,6-dehydratase sdnI from Sordaria araneosa (Pleurage araneosa).